The chain runs to 123 residues: UPF0231 protein plu3616 (123 aa).

The protein belongs to the UPF0231 family.

The polypeptide is UPF0231 protein plu3616 (Photorhabdus laumondii subsp. laumondii (strain DSM 15139 / CIP 105565 / TT01) (Photorhabdus luminescens subsp. laumondii)).